The sequence spans 362 residues: Carbamoyl phosphate synthase small chain (362 aa).

The interval 1 to 172 is CPSase; the sequence is MKAFLVLDNG…SKYIFGTHTG (172 aa). Ser45, Gly224, and Gly226 together coordinate L-glutamine. Residues 176-362 form the Glutamine amidotransferase type-1 domain; that stretch reads KLAVYDYGVK…YDLVEKTKKG (187 aa). Cys252 acts as the Nucleophile in catalysis. L-glutamine contacts are provided by Leu253, Gln256, Asn294, Gly296, and Phe297. Residues His335 and Glu337 contribute to the active site.

Belongs to the CarA family. As to quaternary structure, composed of two chains; the small (or glutamine) chain promotes the hydrolysis of glutamine to ammonia, which is used by the large (or ammonia) chain to synthesize carbamoyl phosphate. Tetramer of heterodimers (alpha,beta)4.

The enzyme catalyses hydrogencarbonate + L-glutamine + 2 ATP + H2O = carbamoyl phosphate + L-glutamate + 2 ADP + phosphate + 2 H(+). It catalyses the reaction L-glutamine + H2O = L-glutamate + NH4(+). Its pathway is amino-acid biosynthesis; L-arginine biosynthesis; carbamoyl phosphate from bicarbonate: step 1/1. The protein operates within pyrimidine metabolism; UMP biosynthesis via de novo pathway; (S)-dihydroorotate from bicarbonate: step 1/3. Small subunit of the glutamine-dependent carbamoyl phosphate synthetase (CPSase). CPSase catalyzes the formation of carbamoyl phosphate from the ammonia moiety of glutamine, carbonate, and phosphate donated by ATP, constituting the first step of 2 biosynthetic pathways, one leading to arginine and/or urea and the other to pyrimidine nucleotides. The small subunit (glutamine amidotransferase) binds and cleaves glutamine to supply the large subunit with the substrate ammonia. In Leptospira interrogans serogroup Icterohaemorrhagiae serovar Lai (strain 56601), this protein is Carbamoyl phosphate synthase small chain.